We begin with the raw amino-acid sequence, 296 residues long: uncharacterized protein (296 aa).

Residues 129–170 (VKELKDLIRTVADEHMKMKREHEAAMKELTLLINNQKQQQQQ) are a coiled coil. Positions 165-187 (KQQQQQPVPMPRNSTATRPKNLA) are disordered.

This is an uncharacterized protein from Ostreid herpesvirus 1 (isolate France) (OsHV-1).